The primary structure comprises 383 residues: Mannitol-1-phosphate 5-dehydrogenase (383 aa).

Position 3 to 14 (3 to 14 (ALHFGAGNIGRG)) interacts with NAD(+).

Belongs to the mannitol dehydrogenase family.

The enzyme catalyses D-mannitol 1-phosphate + NAD(+) = beta-D-fructose 6-phosphate + NADH + H(+). This is Mannitol-1-phosphate 5-dehydrogenase from Serratia proteamaculans (strain 568).